The chain runs to 641 residues: 1,3-beta-glucanosyltransferase PGA5 (641 aa).

An N-terminal signal peptide occupies residues 1–23; that stretch reads MTTLSTIWLFLITITAIFQLGLS. N-linked (GlcNAc...) asparagine glycosylation occurs at N25. C106 and C135 form a disulfide bridge. Positions 124, 192, 193, 234, and 239 each coordinate (1,3-beta-D-glucosyl)n. Residue E193 is the Proton donor of the active site. Cystine bridges form between C248–C390, C276–C307, C424–C474, C426–C528, C433–C498, and C451–C456. The Nucleophile role is filled by E304. Y336 serves as a coordination point for (1,3-beta-D-glucosyl)n. The tract at residues 535 to 613 is disordered; that stretch reads KEEEKEVQEE…SPKTSKSIAG (79 aa). Residues 571 to 581 show a composition bias toward basic and acidic residues; it reads KSKEKEKGKLI. Residues 582 to 593 show a composition bias toward acidic residues; sequence EEEEEEEEEEEE. The span at 596-610 shows a compositional bias: polar residues; the sequence is KTPSSGEKSPKTSKS. N621 carries an N-linked (GlcNAc...) asparagine glycan. D622 carries GPI-anchor amidated aspartate lipidation. Residues 623–641 constitute a propeptide, removed in mature form; sequence SIWKTFIEILFTCSAAILI.

This sequence belongs to the glycosyl hydrolase 72 family.

Its subcellular location is the cell membrane. Splits internally a 1,3-beta-glucan molecule and transfers the newly generated reducing end (the donor) to the non-reducing end of another 1,3-beta-glucan molecule (the acceptor) forming a 1,3-beta linkage, resulting in the elongation of 1,3-beta-glucan chains in the cell wall. Involved in spore wall assembly. This chain is 1,3-beta-glucanosyltransferase PGA5 (PGA5), found in Candida albicans (strain SC5314 / ATCC MYA-2876) (Yeast).